The sequence spans 491 residues: Cytochrome P450 2F1 (491 aa).

Cys436 contributes to the heme binding site.

This sequence belongs to the cytochrome P450 family. It depends on heme as a cofactor. As to expression, expressed in lung. Rarely detected in liver and placenta.

The protein localises to the endoplasmic reticulum membrane. It is found in the microsome membrane. It catalyses the reaction an organic molecule + reduced [NADPH--hemoprotein reductase] + O2 = an alcohol + oxidized [NADPH--hemoprotein reductase] + H2O + H(+). Functionally, may be involved in the metabolism of various pneumotoxicants including naphthalene. Is able to dealkylate ethoxycoumarin, propoxycoumarin, and pentoxyresorufin but possesses no activity toward ethoxyresorufin and only trace dearylation activity toward benzyloxyresorufin. Bioactivates 3-methylindole (3MI) by dehydrogenation to the putative electrophile 3-methylene-indolenine. This is Cytochrome P450 2F1 (CYP2F1) from Homo sapiens (Human).